Here is a 432-residue protein sequence, read N- to C-terminus: Adenylosuccinate synthetase (432 aa).

Residues 13–19 (GDEGKGK) and 41–43 (GHT) each bind GTP. Catalysis depends on Asp14, which acts as the Proton acceptor. Asp14 and Gly41 together coordinate Mg(2+). Residues 14–17 (DEGK), 39–42 (NAGH), Thr131, Arg145, Gln226, Thr241, and Arg305 each bind IMP. The active-site Proton donor is the His42. 301–307 (SVTGRAR) is a binding site for substrate. Residues Arg307, 333-335 (KLD), and 416-418 (STG) each bind GTP.

The protein belongs to the adenylosuccinate synthetase family. In terms of assembly, homodimer. Requires Mg(2+) as cofactor.

The protein localises to the cytoplasm. The enzyme catalyses IMP + L-aspartate + GTP = N(6)-(1,2-dicarboxyethyl)-AMP + GDP + phosphate + 2 H(+). Its pathway is purine metabolism; AMP biosynthesis via de novo pathway; AMP from IMP: step 1/2. Functionally, plays an important role in the de novo pathway of purine nucleotide biosynthesis. Catalyzes the first committed step in the biosynthesis of AMP from IMP. The polypeptide is Adenylosuccinate synthetase (Neisseria meningitidis serogroup C (strain 053442)).